Here is a 527-residue protein sequence, read N- to C-terminus: Amine oxidase [flavin-containing] A (527 aa).

Position 1 is an N-acetylmethionine (Met1). Over 1 to 497 (MENQEKASIA…HTFWERNLPS (497 aa)) the chain is Cytoplasmic. The residue at position 383 (Ser383) is a Phosphoserine. S-8alpha-FAD cysteine is present on Cys406. A helical; Anchor for type IV membrane protein membrane pass occupies residues 498–518 (VSGLLKIIGFSTSVTALGFVL). The Mitochondrial intermembrane segment spans residues 519 to 527 (YKYKLLPRS). The interval 520–522 (KYK) is interaction with membrane phospholipid headgroups.

It belongs to the flavin monoamine oxidase family. Monomer, homo- or heterodimer (containing two subunits of similar size). Each subunit contains a covalently bound flavin. Enzymatically active as monomer. FAD serves as cofactor.

The protein localises to the mitochondrion outer membrane. It catalyses the reaction a secondary aliphatic amine + O2 + H2O = a primary amine + an aldehyde + H2O2. The enzyme catalyses a primary methyl amine + O2 + H2O = an aldehyde + H2O2 + NH4(+). It carries out the reaction (R)-adrenaline + O2 + H2O = (R)-3,4-dihydroxymandelaldehyde + methylamine + H2O2. The catalysed reaction is dopamine + O2 + H2O = 3,4-dihydroxyphenylacetaldehyde + H2O2 + NH4(+). It catalyses the reaction tyramine + O2 + H2O = (4-hydroxyphenyl)acetaldehyde + H2O2 + NH4(+). The enzyme catalyses (R)-noradrenaline + O2 + H2O = (R)-3,4-dihydroxymandelaldehyde + H2O2 + NH4(+). It carries out the reaction serotonin + O2 + H2O = (5-hydroxyindol-3-yl)acetaldehyde + H2O2 + NH4(+). The catalysed reaction is kynuramine + O2 + H2O = 3-(2-aminophenyl)-3-oxopropanal + H2O2 + NH4(+). It catalyses the reaction tryptamine + O2 + H2O = indole-3-acetaldehyde + H2O2 + NH4(+). The enzyme catalyses 2-phenylethylamine + O2 + H2O = 2-phenylacetaldehyde + H2O2 + NH4(+). Its function is as follows. Catalyzes the oxidative deamination of primary and some secondary amine such as neurotransmitters, with concomitant reduction of oxygen to hydrogen peroxide and has important functions in the metabolism of neuroactive and vasoactive amines in the central nervous system and peripheral tissues. Preferentially oxidizes serotonin. Also catalyzes the oxidative deamination of kynuramine to 3-(2-aminophenyl)-3-oxopropanal that can spontaneously condense to 4-hydroxyquinoline. The chain is Amine oxidase [flavin-containing] A from Pongo abelii (Sumatran orangutan).